A 175-amino-acid chain; its full sequence is Large ribosomal subunit protein uL10 (175 aa).

This sequence belongs to the universal ribosomal protein uL10 family. In terms of assembly, part of the ribosomal stalk of the 50S ribosomal subunit. The N-terminus interacts with L11 and the large rRNA to form the base of the stalk. The C-terminus forms an elongated spine to which L12 dimers bind in a sequential fashion forming a multimeric L10(L12)X complex.

Functionally, forms part of the ribosomal stalk, playing a central role in the interaction of the ribosome with GTP-bound translation factors. The polypeptide is Large ribosomal subunit protein uL10 (Xylella fastidiosa (strain M23)).